The primary structure comprises 338 residues: Large ribosomal subunit protein uL3 (338 aa).

Residues 1 to 37 (MPQPSRPRKGSMGFSPRKRAESEVPRIRSWASNDGAP) form a disordered region.

The protein belongs to the universal ribosomal protein uL3 family. In terms of assembly, part of the 50S ribosomal subunit. Forms a cluster with proteins L14 and L24e.

One of the primary rRNA binding proteins, it binds directly near the 3'-end of the 23S rRNA, where it nucleates assembly of the 50S subunit. The chain is Large ribosomal subunit protein uL3 from Haloquadratum walsbyi (strain DSM 16790 / HBSQ001).